Consider the following 160-residue polypeptide: Sperm acrosome-associated protein 5 (160 aa).

An N-terminal signal peptide occupies residues 1-21 (MKVCSIVVVILAVLLIAKLDA). The C-type lysozyme domain maps to 22–150 (KIYERCELAK…SEWLKGCSVR (129 aa)). Disulfide bonds link Cys27-Cys147, Cys51-Cys135, Cys85-Cys100, and Cys96-Cys114. Glu56 is a catalytic residue.

Belongs to the glycosyl hydrolase 22 family.

Its subcellular location is the secreted. It carries out the reaction Hydrolysis of (1-&gt;4)-beta-linkages between N-acetylmuramic acid and N-acetyl-D-glucosamine residues in a peptidoglycan and between N-acetyl-D-glucosamine residues in chitodextrins.. This chain is Sperm acrosome-associated protein 5 (Spaca5), found in Mus musculus (Mouse).